A 689-amino-acid chain; its full sequence is Elongation factor G (689 aa).

The tr-type G domain occupies 8–282 (ENTRNLGIMA…AVVDYLPSPL (275 aa)). GTP contacts are provided by residues 17–24 (AHIDAGKT), 81–85 (DTPGH), and 135–138 (NKMD).

Belongs to the TRAFAC class translation factor GTPase superfamily. Classic translation factor GTPase family. EF-G/EF-2 subfamily.

The protein resides in the cytoplasm. In terms of biological role, catalyzes the GTP-dependent ribosomal translocation step during translation elongation. During this step, the ribosome changes from the pre-translocational (PRE) to the post-translocational (POST) state as the newly formed A-site-bound peptidyl-tRNA and P-site-bound deacylated tRNA move to the P and E sites, respectively. Catalyzes the coordinated movement of the two tRNA molecules, the mRNA and conformational changes in the ribosome. The polypeptide is Elongation factor G (Mesoplasma florum (strain ATCC 33453 / NBRC 100688 / NCTC 11704 / L1) (Acholeplasma florum)).